The sequence spans 794 residues: Solute carrier family 26 member 9 (794 aa).

Topologically, residues 1-70 (MNKVRPRYII…WLPKYNIKGN (70 aa)) are cytoplasmic. A helical membrane pass occupies residues 71–96 (LLNDALGGISAGTIQIPQGMAFALLA). Topologically, residues 97–100 (NLPP) are extracellular. A helical membrane pass occupies residues 101-109 (VNGLYSSFF). The Cytoplasmic segment spans residues 110 to 129 (PLVVYFFMGGIPQMVPGTFA). Residues 130–142 (VISIIVGNVCLKL) traverse the membrane as a helical segment. At 143–160 (APESHFQNVTSNGTITNI) the chain is on the extracellular side. The chain crosses the membrane as a helical span at residues 161 to 189 (EAMNTARMHISATLACLTAIIQIALSFVQ). Over 190–199 (FGFVAIYLSE) the chain is Cytoplasmic. Residues 200-222 (SFIRGFMTAAGLQILISVLKYIF) form a helical membrane-spanning segment. The Extracellular segment spans residues 223–235 (GVSIPPYSGVLAI). Residues 236–244 (IYTFIDICK) constitute an intramembrane region (helical). Topologically, residues 245–252 (ELPKTNVA) are extracellular. A helical membrane pass occupies residues 253-273 (SLIFALISTVLLIIVKELNMK). Residues 274–284 (FMHKIRFPIPM) are Cytoplasmic-facing. Residues 285–297 (EIIIVIVATAVSG) traverse the membrane as a helical segment. At 298–332 (SFKLPERYHMNVVGHIPLGFPSPTVPNVTQWDEMV) the chain is on the extracellular side. A helical transmembrane segment spans residues 333 to 356 (GTAFSLAIVGYVINLAMGRTLGAK). At 357–363 (HGFDVDA) the chain is on the cytoplasmic side. A helical transmembrane segment spans residues 364–377 (NQEMLALGSGNFFG). At 378-388 (SFFFIHVICCA) the chain is on the extracellular side. The chain crosses the membrane as a helical span at residues 389–398 (LSVTLAVDGA). Topologically, residues 399 to 403 (GGKSQ) are cytoplasmic. Residues 404–417 (IASFFVMMSVMVTI) traverse the membrane as a helical segment. Topologically, residues 418-429 (LALGTYLNPLPK) are extracellular. The chain crosses the membrane as a helical span at residues 430 to 455 (SVLGALIAVNLKNSLKQLSDPFYLWK). The Cytoplasmic segment spans residues 456 to 459 (KSKL). Residues 460 to 474 (DCLVWLVSFFSTFIL) form a helical membrane-spanning segment. At 475-477 (GLP) the chain is on the extracellular side. A helical transmembrane segment spans residues 478 to 496 (YGLAVGVAFSILVVIFNTQ). Over 497–794 (FRNGSSLNQV…MFQTEIQTAL (298 aa)) the chain is Cytoplasmic. One can recognise an STAS domain in the interval 517–739 (VYSKVQPIDG…ITVHDAVLYA (223 aa)).

The protein belongs to the SLC26A/SulP transporter (TC 2.A.53) family. In terms of assembly, homodimer.

Its subcellular location is the cell membrane. The protein localises to the endomembrane system. The catalysed reaction is chloride(in) = chloride(out). The enzyme catalyses hydrogencarbonate(in) + chloride(out) = hydrogencarbonate(out) + chloride(in). Inhibited by ammonium and thiosulfate. In terms of biological role, ion transporter that can act both as an ion channel and anion exchanger. Mainly acts as a chloride channel, which mediate uncoupled chloride anion transport in an alternate-access mechanism where a saturable binding site is alternately exposed to either one or the other side of the membrane. Also acts as a DIDS- and thiosulfate- sensitive anion exchanger the exchange of chloride for bicarbonate ions across the cell membrane. The protein is Solute carrier family 26 member 9 (slc26a9) of Xenopus tropicalis (Western clawed frog).